Consider the following 900-residue polypeptide: UPF0182 protein Ppro_3567 (900 aa).

A run of 7 helical transmembrane segments spans residues 15 to 35 (FFPLLILVSVLLSLISYLLNL), 60 to 80 (GAGLLFGGLLFLFVQINLHVA), 112 to 132 (VSMLVSFVLALLAGNLGAMKW), 174 to 194 (FIILAAAALATAVYYVRGGIL), 210 to 230 (LAVLVGIFACAVAAGFYLDSF), 257 to 277 (VLTFLTPLAGAMLAIGIWKGV), and 282 to 302 (LLAPAIVVALYMLGIRVYPGV).

The protein belongs to the UPF0182 family.

The protein localises to the cell membrane. This is UPF0182 protein Ppro_3567 from Pelobacter propionicus (strain DSM 2379 / NBRC 103807 / OttBd1).